The primary structure comprises 1157 residues: DNA-directed RNA polymerase subunit beta (1157 aa).

The protein belongs to the RNA polymerase beta chain family. The RNAP catalytic core consists of 2 alpha, 1 beta, 1 beta' and 1 omega subunit. When a sigma factor is associated with the core the holoenzyme is formed, which can initiate transcription.

The catalysed reaction is RNA(n) + a ribonucleoside 5'-triphosphate = RNA(n+1) + diphosphate. Its function is as follows. DNA-dependent RNA polymerase catalyzes the transcription of DNA into RNA using the four ribonucleoside triphosphates as substrates. In Tropheryma whipplei (Whipple's bacillus), this protein is DNA-directed RNA polymerase subunit beta.